We begin with the raw amino-acid sequence, 70 residues long: Small ribosomal subunit protein bS21B (70 aa).

It belongs to the bacterial ribosomal protein bS21 family.

This is Small ribosomal subunit protein bS21B from Paraburkholderia xenovorans (strain LB400).